A 286-amino-acid chain; its full sequence is Beta-lactamase SHV-1 (286 aa).

A signal peptide spans 1 to 21 (MRYIRLCIISLLATLPLAVHA). S66 (acyl-ester intermediate) is an active-site residue. A disulfide bridge links C73 with C119. The active-site Proton acceptor is the E164. Position 230 to 232 (230 to 232 (KTG)) interacts with substrate.

The protein belongs to the class-A beta-lactamase family.

The enzyme catalyses a beta-lactam + H2O = a substituted beta-amino acid. The polypeptide is Beta-lactamase SHV-1 (bla) (Escherichia coli).